The chain runs to 492 residues: N-succinylglutamate 5-semialdehyde dehydrogenase (492 aa).

220 to 225 (GSANTG) contacts NAD(+). Catalysis depends on residues E243 and C277.

This sequence belongs to the aldehyde dehydrogenase family. AstD subfamily.

The catalysed reaction is N-succinyl-L-glutamate 5-semialdehyde + NAD(+) + H2O = N-succinyl-L-glutamate + NADH + 2 H(+). Its pathway is amino-acid degradation; L-arginine degradation via AST pathway; L-glutamate and succinate from L-arginine: step 4/5. Functionally, catalyzes the NAD-dependent reduction of succinylglutamate semialdehyde into succinylglutamate. This is N-succinylglutamate 5-semialdehyde dehydrogenase from Escherichia coli (strain K12 / MC4100 / BW2952).